A 332-amino-acid chain; its full sequence is Ribosomal RNA small subunit methyltransferase H (332 aa).

S-adenosyl-L-methionine contacts are provided by residues 36–38, D54, F81, D102, and Q109; that span reads GGY. Residues 297–318 form a disordered region; the sequence is ARSAKLRGAERTEAPAHAAGDL.

This sequence belongs to the methyltransferase superfamily. RsmH family.

Its subcellular location is the cytoplasm. The catalysed reaction is cytidine(1402) in 16S rRNA + S-adenosyl-L-methionine = N(4)-methylcytidine(1402) in 16S rRNA + S-adenosyl-L-homocysteine + H(+). Its function is as follows. Specifically methylates the N4 position of cytidine in position 1402 (C1402) of 16S rRNA. This Rhodopseudomonas palustris (strain TIE-1) protein is Ribosomal RNA small subunit methyltransferase H.